We begin with the raw amino-acid sequence, 140 residues long: Relaxin-3 (140 aa).

The N-terminal stretch at 1–26 (MAKRPLLLLLLAVWVLAGELWLRTEA) is a signal peptide. Disulfide bonds link cysteine 36/cysteine 127, cysteine 48/cysteine 140, and cysteine 126/cysteine 131. Residues 56 to 116 (SDMLAHEALG…RTPGALRGSR (61 aa)) constitute a propeptide, connecting peptide.

This sequence belongs to the insulin family. Heterodimer of a B chain and an A chain linked by two disulfide bonds.

Its subcellular location is the secreted. May play a role in neuropeptide signaling processes. Ligand for LGR7, RXFP3 and RXFP4. The polypeptide is Relaxin-3 (RLN3) (Sus scrofa (Pig)).